We begin with the raw amino-acid sequence, 1111 residues long: Cellulose synthase-like protein D4 (1111 aa).

Disordered regions lie at residues 1–26 (MAST…KFAR) and 175–202 (DYSS…MMKR). Polar residues predominate over residues 192–202 (GNNNNMSMMKR). 2 helical membrane passes run 266 to 286 (AIIS…CFFL) and 297 to 317 (AIWL…SWIL). Catalysis depends on residues D397 and D809. The next 6 membrane-spanning stretches (helical) occupy residues 891–911 (LFLI…QFIV), 914–934 (LSIS…GLAV), 963–983 (LYAV…SFTL), 1007–1027 (LMIP…VAFI), 1040–1060 (LIGG…FAKG), and 1070–1090 (TIVF…WTAI).

It belongs to the glycosyltransferase 2 family. Plant cellulose synthase-like D subfamily.

It is found in the golgi apparatus membrane. In terms of biological role, thought to be a Golgi-localized beta-glycan synthase that polymerize the backbones of noncellulosic polysaccharides (hemicelluloses) of plant cell wall. This chain is Cellulose synthase-like protein D4 (CSLD4), found in Arabidopsis thaliana (Mouse-ear cress).